A 513-amino-acid chain; its full sequence is uncharacterized protein (513 aa).

The CYTH domain maps to 11–219; that stretch reads HLEVERKFDV…SKLARVLGAT (209 aa). The 279-residue stretch at 228-506 folds into the CHAD domain; the sequence is PQPPADPVHR…LEAALRKLDK (279 aa).

This is an uncharacterized protein from Mycobacterium tuberculosis (strain CDC 1551 / Oshkosh).